The sequence spans 427 residues: Mitochondrial distribution and morphology protein 12 (427 aa).

In terms of domain architecture, SMP-LTD spans 1–387; that stretch reads MSFDINWNQL…WPSWICIDMN (387 aa). Residues 81–96 show a composition bias toward basic and acidic residues; it reads NDSKDEHLKNHGDGIN. 2 disordered regions span residues 81–168 and 387–427; these read NDSK…APPL and NDDD…EAGE. Residues 106–133 show a composition bias toward acidic residues; that stretch reads LDDEDEDDEDDDEDDEDEEEEDEDDYDD. The span at 146-161 shows a compositional bias: polar residues; the sequence is LNFNENSTTPSANSFA. The segment covering 387–402 has biased composition (acidic residues); the sequence is NDDDDEEEEEESEDND. Residues 411 to 427 show a composition bias toward basic and acidic residues; sequence NDGKHGDGRTDETEAGE.

Belongs to the MDM12 family. Component of the ER-mitochondria encounter structure (ERMES) or MDM complex, composed of MMM1, MDM10, MDM12 and MDM34. An MMM1 homodimer associates with one molecule of MDM12 on each side in a pairwise head-to-tail manner, and the SMP-LTD domains of MMM1 and MDM12 generate a continuous hydrophobic tunnel for phospholipid trafficking.

Its subcellular location is the mitochondrion outer membrane. The protein resides in the endoplasmic reticulum membrane. Component of the ERMES/MDM complex, which serves as a molecular tether to connect the endoplasmic reticulum (ER) and mitochondria. Components of this complex are involved in the control of mitochondrial shape and protein biogenesis, and function in nonvesicular lipid trafficking between the ER and mitochondria. MDM12 is required for the interaction of the ER-resident membrane protein MMM1 and the outer mitochondrial membrane-resident beta-barrel protein MDM10. The MDM12-MMM1 subcomplex functions in the major beta-barrel assembly pathway that is responsible for biogenesis of all mitochondrial outer membrane beta-barrel proteins, and acts in a late step after the SAM complex. The MDM10-MDM12-MMM1 subcomplex further acts in the TOM40-specific pathway after the action of the MDM12-MMM1 complex. Essential for establishing and maintaining the structure of mitochondria and maintenance of mtDNA nucleoids. The chain is Mitochondrial distribution and morphology protein 12 from Candida albicans (strain WO-1) (Yeast).